A 290-amino-acid polypeptide reads, in one-letter code: NAD kinase (290 aa).

Aspartate 72 (proton acceptor) is an active-site residue. NAD(+)-binding positions include 72-73 (DG), 146-147 (NE), arginine 174, aspartate 176, and 187-192 (TAYALS).

Belongs to the NAD kinase family. A divalent metal cation is required as a cofactor.

The protein localises to the cytoplasm. It catalyses the reaction NAD(+) + ATP = ADP + NADP(+) + H(+). In terms of biological role, involved in the regulation of the intracellular balance of NAD and NADP, and is a key enzyme in the biosynthesis of NADP. Catalyzes specifically the phosphorylation on 2'-hydroxyl of the adenosine moiety of NAD to yield NADP. This chain is NAD kinase, found in Methylococcus capsulatus (strain ATCC 33009 / NCIMB 11132 / Bath).